An 820-amino-acid chain; its full sequence is Leucine--tRNA ligase (820 aa).

The 'HIGH' region motif lies at 40–51; sequence PYPSGAGLHVGH. A 'KMSKS' region motif is present at residues 601-605; it reads KMSKS. K604 lines the ATP pocket.

The protein belongs to the class-I aminoacyl-tRNA synthetase family.

It localises to the cytoplasm. It catalyses the reaction tRNA(Leu) + L-leucine + ATP = L-leucyl-tRNA(Leu) + AMP + diphosphate. In Chlamydia caviae (strain ATCC VR-813 / DSM 19441 / 03DC25 / GPIC) (Chlamydophila caviae), this protein is Leucine--tRNA ligase.